A 95-amino-acid chain; its full sequence is Large ribosomal subunit protein eL31 (95 aa).

Belongs to the eukaryotic ribosomal protein eL31 family. Part of the 50S ribosomal subunit.

The polypeptide is Large ribosomal subunit protein eL31 (Pyrococcus furiosus (strain ATCC 43587 / DSM 3638 / JCM 8422 / Vc1)).